We begin with the raw amino-acid sequence, 426 residues long: Serine--tRNA ligase (426 aa).

An L-serine-binding site is contributed by threonine 233–glutamate 235. Position 264 to 266 (arginine 264 to glutamate 266) interacts with ATP. Residue glutamate 287 participates in L-serine binding. Glutamate 351 to serine 354 lines the ATP pocket. Serine 387 serves as a coordination point for L-serine.

Belongs to the class-II aminoacyl-tRNA synthetase family. Type-1 seryl-tRNA synthetase subfamily. As to quaternary structure, homodimer. The tRNA molecule binds across the dimer.

It is found in the cytoplasm. The enzyme catalyses tRNA(Ser) + L-serine + ATP = L-seryl-tRNA(Ser) + AMP + diphosphate + H(+). It catalyses the reaction tRNA(Sec) + L-serine + ATP = L-seryl-tRNA(Sec) + AMP + diphosphate + H(+). It participates in aminoacyl-tRNA biosynthesis; selenocysteinyl-tRNA(Sec) biosynthesis; L-seryl-tRNA(Sec) from L-serine and tRNA(Sec): step 1/1. Its function is as follows. Catalyzes the attachment of serine to tRNA(Ser). Is also able to aminoacylate tRNA(Sec) with serine, to form the misacylated tRNA L-seryl-tRNA(Sec), which will be further converted into selenocysteinyl-tRNA(Sec). This Pseudomonas fluorescens (strain Pf0-1) protein is Serine--tRNA ligase.